The chain runs to 116 residues: QAPPDKVIPIISQNEVRNPDGSYQWNYETGNGIKADETGTLKKGSKPDEGDFIVAQGSFSYTGPDGTAYSVQYQADDENGFVPQGAHFPTPPPIPPAIQRALDYLATLPSTPEPRP.

Glutamine 1 is modified (pyrrolidone carboxylic acid). A Chitin-binding type R&amp;R domain is found at 20–92; sequence DGSYQWNYET…PQGAHFPTPP (73 aa). Threonine 90 and threonine 107 each carry an O-linked (HexNAc...) threonine glycan. Serine 110 carries an O-linked (HexNAc...) serine glycan. O-linked (HexNAc...) threonine glycosylation is present at threonine 111. A Proline amide modification is found at proline 116.

Component of the abdominal endocuticle. The sequence is that of Endocuticle structural glycoprotein SgAbd-4 from Schistocerca gregaria (Desert locust).